A 321-amino-acid chain; its full sequence is Beta-ketoacyl-[acyl-carrier-protein] synthase III (321 aa).

Catalysis depends on residues Cys114 and His248. Positions 249-253 (QANIR) are ACP-binding. Asn278 is an active-site residue.

Belongs to the thiolase-like superfamily. FabH family. Homodimer.

It is found in the cytoplasm. The enzyme catalyses malonyl-[ACP] + acetyl-CoA + H(+) = 3-oxobutanoyl-[ACP] + CO2 + CoA. Its pathway is lipid metabolism; fatty acid biosynthesis. In terms of biological role, catalyzes the condensation reaction of fatty acid synthesis by the addition to an acyl acceptor of two carbons from malonyl-ACP. Catalyzes the first condensation reaction which initiates fatty acid synthesis and may therefore play a role in governing the total rate of fatty acid production. Possesses both acetoacetyl-ACP synthase and acetyl transacylase activities. Its substrate specificity determines the biosynthesis of branched-chain and/or straight-chain of fatty acids. The protein is Beta-ketoacyl-[acyl-carrier-protein] synthase III of Methylococcus capsulatus (strain ATCC 33009 / NCIMB 11132 / Bath).